Here is a 313-residue protein sequence, read N- to C-terminus: Short-chain dehydrogenase/reductase family 9C member 7 (313 aa).

29–53 is a binding site for NADP(+); it reads FITGCDSGFGNLLAKQLVDRGMQVL. Position 160 (Ser160) interacts with substrate. Tyr172 acts as the Proton acceptor in catalysis. Ser185 carries the phosphoserine modification.

The protein belongs to the short-chain dehydrogenases/reductases (SDR) family. Expressed in the skin. Expressed in granular and cornified layers of the epidermis (at protein level). Highly expressed in liver.

It is found in the cytoplasm. The catalysed reaction is a N-[omega-(9R,10R)-epoxy-(13R)-hydroxy-(11E)-octadecenoyloxy]acyl-beta-D-glucosyl-(1&lt;-&gt;1)-sphing-4E-enine + NAD(+) = a N-[omega-(9R,10R)-epoxy-13-oxo-(11E)-octadecenoyloxy]acyl-beta-D-glucosyl-(1&lt;-&gt;1)-sphing-4E-enine + NADH + H(+). It carries out the reaction a N-[omega-(9R,10R)-epoxy-(13R)-hydroxy-(11E)-octadecenoyloxy]-acylsphing-4E-enine + NAD(+) = a N-[omega-(9R,10R)-epoxy-13-oxo-(11E)-octadecenoyloxy]-acylsphing-4E-enine + NADH + H(+). Functionally, plays a crucial role in the formation of the epidermal permeability barrier. Catalyzes the NAD+-dependent dehydrogenation of the linoleate 9,10-trans-epoxy-11E-13-alcohol esterified in omega-O-acylceramides (such as in N-[omega-(9R,10R)-epoxy-(13R)-hydroxy-(11E)-octadecenoyloxy]-acylsphing-4E-enine) to the corresponding 13-ketone, the reactive moiety required for binding of epidermal ceramides to proteins. Displays weak conversion of all-trans-retinal to all-trans-retinol in the presence of NADH. Has apparently no steroid dehydrogenase activity. This Homo sapiens (Human) protein is Short-chain dehydrogenase/reductase family 9C member 7 (SDR9C7).